The following is a 60-amino-acid chain: DNA gyrase inhibitor YacG (60 aa).

4 residues coordinate Zn(2+): C15, C18, C30, and C34.

It belongs to the DNA gyrase inhibitor YacG family. Interacts with GyrB. Zn(2+) serves as cofactor.

In terms of biological role, inhibits all the catalytic activities of DNA gyrase by preventing its interaction with DNA. Acts by binding directly to the C-terminal domain of GyrB, which probably disrupts DNA binding by the gyrase. In Nitrobacter hamburgensis (strain DSM 10229 / NCIMB 13809 / X14), this protein is DNA gyrase inhibitor YacG.